The sequence spans 184 residues: Large ribosomal subunit protein uL18 (184 aa).

This sequence belongs to the universal ribosomal protein uL18 family. As to quaternary structure, part of the 50S ribosomal subunit. Contacts the 5S and 23S rRNAs.

In terms of biological role, this is one of the proteins that bind and probably mediate the attachment of the 5S RNA into the large ribosomal subunit, where it forms part of the central protuberance. The protein is Large ribosomal subunit protein uL18 (rpl18) of Haloferax volcanii (strain ATCC 29605 / DSM 3757 / JCM 8879 / NBRC 14742 / NCIMB 2012 / VKM B-1768 / DS2) (Halobacterium volcanii).